A 430-amino-acid chain; its full sequence is tRNA(Ile)-lysidine synthase (430 aa).

Ser-21–Ser-26 serves as a coordination point for ATP.

It belongs to the tRNA(Ile)-lysidine synthase family.

The protein resides in the cytoplasm. The enzyme catalyses cytidine(34) in tRNA(Ile2) + L-lysine + ATP = lysidine(34) in tRNA(Ile2) + AMP + diphosphate + H(+). Functionally, ligates lysine onto the cytidine present at position 34 of the AUA codon-specific tRNA(Ile) that contains the anticodon CAU, in an ATP-dependent manner. Cytidine is converted to lysidine, thus changing the amino acid specificity of the tRNA from methionine to isoleucine. This is tRNA(Ile)-lysidine synthase from Salmonella schwarzengrund (strain CVM19633).